A 377-amino-acid polypeptide reads, in one-letter code: Spermidine/putrescine import ATP-binding protein PotA (377 aa).

The region spanning 18 to 248 (IRLSGISKSF…PKNLFVARFI (231 aa)) is the ABC transporter domain. 50–57 (GPSGCGKT) contacts ATP.

The protein belongs to the ABC transporter superfamily. Spermidine/putrescine importer (TC 3.A.1.11.1) family. The complex is composed of two ATP-binding proteins (PotA), two transmembrane proteins (PotB and PotC) and a solute-binding protein (PotD).

The protein localises to the cell inner membrane. It carries out the reaction ATP + H2O + polyamine-[polyamine-binding protein]Side 1 = ADP + phosphate + polyamineSide 2 + [polyamine-binding protein]Side 1.. Part of the ABC transporter complex PotABCD involved in spermidine/putrescine import. Responsible for energy coupling to the transport system. The polypeptide is Spermidine/putrescine import ATP-binding protein PotA (Vibrio parahaemolyticus serotype O3:K6 (strain RIMD 2210633)).